The following is a 258-amino-acid chain: uncharacterized protein (258 aa).

Residue 36-43 (GKAGTGKS) coordinates ATP.

It belongs to the IIV-6 075L family.

This is an uncharacterized protein from Acheta domesticus (House cricket).